We begin with the raw amino-acid sequence, 147 residues long: Ponticulin-like protein C4 (147 aa).

An N-terminal signal peptide occupies residues 1–20; that stretch reads MKFTKSLLLLIVAVFASSNA. Asn118 carries GPI-like-anchor amidated asparagine lipidation. N-linked (GlcNAc...) asparagine glycosylation occurs at Asn118. A propeptide spans 119–147 (removed in mature form); it reads SSESDSSDSTRIGASFALAAAALLSMIAL.

This sequence belongs to the ponticulin family. The GPI-like-anchor contains a phosphoceramide group, rather than a phosphatidyl group.

It localises to the cell membrane. The chain is Ponticulin-like protein C4 (ponC4) from Dictyostelium discoideum (Social amoeba).